The following is a 1112-amino-acid chain: DNA repair protein rad13 (1112 aa).

Positions 1–95 are N-domain; the sequence is MGVSGLWDIL…QTIQKRQARR (95 aa). Mg(2+)-binding residues include D30 and D77. The UIM domain maps to 395–414; it reads TDDLILQLATQQSLEENKKS. Residues 742-870 are I-domain; it reads KRSEKRDADE…LALEILHEFP (129 aa). E777, E779, D798, D800, and D849 together coordinate Mg(2+). A disordered region spans residues 1056-1112; the sequence is KMMASKNSSDSDSDSEDNFLASLTPKTNSSSISIENLPRKTKLSTSLLKKPSKRRRK. Residues 1079–1089 show a composition bias toward polar residues; it reads TPKTNSSSISI.

Belongs to the XPG/RAD2 endonuclease family. XPG subfamily. Mg(2+) serves as cofactor.

The protein resides in the nucleus. Functionally, single-stranded DNA endonuclease involved in excision repair of DNA damaged with UV light, bulky adducts, or cross-linking agents. Essential for the incision step of excision-repair. The sequence is that of DNA repair protein rad13 (rad13) from Schizosaccharomyces pombe (strain 972 / ATCC 24843) (Fission yeast).